The sequence spans 203 residues: Outer-membrane lipoprotein carrier protein (203 aa).

The first 21 residues, 1–21 (MKKWLAISCLIAGVTSTAVYA), serve as a signal peptide directing secretion.

The protein belongs to the LolA family. Monomer.

It is found in the periplasm. Functionally, participates in the translocation of lipoproteins from the inner membrane to the outer membrane. Only forms a complex with a lipoprotein if the residue after the N-terminal Cys is not an aspartate (The Asp acts as a targeting signal to indicate that the lipoprotein should stay in the inner membrane). The chain is Outer-membrane lipoprotein carrier protein from Pectobacterium atrosepticum (strain SCRI 1043 / ATCC BAA-672) (Erwinia carotovora subsp. atroseptica).